Here is a 448-residue protein sequence, read N- to C-terminus: 3-phosphoshikimate 1-carboxyvinyltransferase (448 aa).

3-phosphoshikimate-binding residues include Lys-38, Ser-39, and Arg-43. Lys-38 is a phosphoenolpyruvate binding site. Positions 111 and 140 each coordinate phosphoenolpyruvate. The 3-phosphoshikimate site is built by Ser-185, Gln-187, Asp-335, and Lys-362. Gln-187 provides a ligand contact to phosphoenolpyruvate. The active-site Proton acceptor is Asp-335. Arg-366 and Arg-408 together coordinate phosphoenolpyruvate.

The protein belongs to the EPSP synthase family. Monomer.

The protein localises to the cytoplasm. It carries out the reaction 3-phosphoshikimate + phosphoenolpyruvate = 5-O-(1-carboxyvinyl)-3-phosphoshikimate + phosphate. The protein operates within metabolic intermediate biosynthesis; chorismate biosynthesis; chorismate from D-erythrose 4-phosphate and phosphoenolpyruvate: step 6/7. Catalyzes the transfer of the enolpyruvyl moiety of phosphoenolpyruvate (PEP) to the 5-hydroxyl of shikimate-3-phosphate (S3P) to produce enolpyruvyl shikimate-3-phosphate and inorganic phosphate. The polypeptide is 3-phosphoshikimate 1-carboxyvinyltransferase (Synechococcus elongatus (strain ATCC 33912 / PCC 7942 / FACHB-805) (Anacystis nidulans R2)).